An 868-amino-acid polypeptide reads, in one-letter code: Lysosomal cholesterol signaling protein (868 aa).

Topologically, residues 1–36 (MDSYFSAKNSTLAGDMNATWPASHGFNATGDPPSMS) are lumenal. The interval 1–368 (MDSYFSAKNS…SAWLLTFPTM (368 aa)) is PIN-like transporter. N9, N17, and N27 each carry an N-linked (GlcNAc...) asparagine glycan. Residues 37 to 57 (ITRLFPALLECFGIVLCGYIA) traverse the membrane as a helical segment. Cholesterol is bound by residues F41 and Y55. Residues 58–77 (GRANIITSTQAKGLGNFVSR) lie on the Cytoplasmic side of the membrane. A helical membrane pass occupies residues 78-98 (FALPALLFKNMVVLNFSNVDW). Topologically, residues 99–102 (AFLY) are lumenal. The chain crosses the membrane as a helical span at residues 103–123 (SVLIGKASVFFIVCVLTLLVA). Over 124–131 (SPESRFSK) the chain is Cytoplasmic. The chain crosses the membrane as a discontinuously helical span at residues 132–152 (AGLFPIFATQSNDFALGYPIV). The Lumenal segment spans residues 153 to 165 (EALYQSTYPEYLQ). Residues 166–186 (YIYLVAPISLMMLNPIGFIFC) traverse the membrane as a helical segment. Over 187 to 211 (EIQKSKDTQNASQNKAKIVGLGFLR) the chain is Cytoplasmic. A discontinuously helical membrane pass occupies residues 212–232 (VLQNPIVFMVFVGIAFNFILD). The Lumenal portion of the chain corresponds to 233–241 (KKIPVYMEN). A discontinuously helical membrane pass occupies residues 242-262 (FLDGLANSFSGSALFYLGLTM). The Cytoplasmic segment spans residues 263-271 (VGKIRRLKK). Positions 264, 265, and 266 each coordinate cholesterol. Residues 272-292 (SAFVVLTLLITAKLLVLPLLC) traverse the membrane as a helical segment. Residues 293 to 313 (REMVELLDKGDSVVNHTSLSN) are Lumenal-facing. N307 carries an N-linked (GlcNAc...) asparagine glycan. A discontinuously helical transmembrane segment spans residues 314 to 334 (YAFLYGVFPVAPGVAIFATQF). The Cytoplasmic segment spans residues 335–344 (NMEVEIITSG). A helical membrane pass occupies residues 345–365 (MVISTFVSAPIMYVSAWLLTF). At 366–379 (PTMDAKPLAYAIQN) the chain is on the lumenal side. A GPCR region spans residues 378–715 (QNVSFDISII…FGIFGLDKHL (338 aa)). N-linked (GlcNAc...) asparagine glycosylation is present at N379. A helical membrane pass occupies residues 380–400 (VSFDISIISLVSLIWSLSILL). Residues 401–412 (LSKKYKQLPHML) lie on the Cytoplasmic side of the membrane. A helical transmembrane segment spans residues 413-433 (TANLLIAQTIVCAGMMIWNFV). Topologically, residues 434 to 436 (KEK) are lumenal. The helical transmembrane segment at 437–457 (NFVGQILVFVLLYSSLYSTYL) threads the bilayer. Residues 458-478 (WTGLLAVSLFLLKKRESVQLP) lie on the Cytoplasmic side of the membrane. A helical membrane pass occupies residues 479 to 499 (VGIIIISGWGIPALLVGVLLI). Residues 500–518 (TGKHNGDSIDSAFFYGKEQ) are Lumenal-facing. Residues 519–539 (MITTAVTLFCSILIAGVSLMC) traverse the membrane as a helical segment. The Cytoplasmic segment spans residues 540–658 (MNRTTQAGHY…GDPQLTRHVL (119 aa)). The disordered stretch occupies residues 550-582 (EGFGQSQNHKPVEPGSTAFEENPAPTNEPELFP). A cholesterol-binding site is contributed by R655. Residues 659 to 679 (LCLLLIIGLFANLSSCLWWLF) form a helical membrane-spanning segment. The Lumenal portion of the chain corresponds to 680–689 (NHETGRLYVE). The helical transmembrane segment at 690–710 (LQFFCAVFNFGQGFISFGIFG) threads the bilayer. Residues 711-868 (LDKHLIILPF…SSPPSVSPKT (158 aa)) lie on the Cytoplasmic side of the membrane. One can recognise a DEP domain in the interval 755-833 (YHRDLCIRNI…DEYLFYRFLQ (79 aa)). The interval 836–868 (PEQSPPARTLRDHQEESYKEIGHSSPPSVSPKT) is disordered. Over residues 844-857 (TLRDHQEESYKEIG) the composition is skewed to basic and acidic residues.

Homodimer; via the transporter region and DEP domain. Interacts with the GATOR1 complex; preventing interaction between GATOR1 and KICSTOR; interaction is disrupted upon cholesterol starvation. In terms of tissue distribution, widely expressed in adult tissues and during development. In brain, widely distributed in forebrain regions, while it shows a more restricted distribution in the midbrain and hindbrain regions. Expressed at highest level in the lateral part of striatum and hippocampus.

The protein resides in the lysosome membrane. Its function is as follows. Cholesterol-binding protein that acts as a regulator of mTORC1 signaling pathway. Acts as a sensor of cholesterol to signal cholesterol sufficiency to mTORC1: in presence of cholesterol, binds cholesterol, leading to disruption of the interaction between the GATOR1 and KICSTOR complexes and promotion of mTORC1 signaling. Upon cholesterol starvation, GPR155/LYCHOS is unable to perturb the association between GATOR1 and KICSTOR, leading to mTORC1 signaling inhibition. Binds indole-3-acetic acid and may play a role in tryptophan metabolism. This is Lysosomal cholesterol signaling protein from Mus musculus (Mouse).